Reading from the N-terminus, the 189-residue chain is Putative OVARIAN TUMOR DOMAIN-containing deubiquitinating enzyme 8 (189 aa).

The 103-residue stretch at 1–103 (MMKSDGNCQF…GIHFNSIYKK (103 aa)) folds into the OTU domain. Asp-5 is a catalytic residue. The active-site Nucleophile is Cys-8. His-96 is a catalytic residue. Residues 105-189 (KEKGSRSSSS…NRNHHFHYSE (85 aa)) form a disordered region. The stretch at 120–181 (WMKLQRKKEN…KKEKKEKKNR (62 aa)) forms a coiled coil. 2 consecutive short sequence motifs (nuclear localization signal) follow at residues 125–132 (RKKENEAK) and 163–170 (KKKAKVQK). Over residues 126–174 (KKENEAKKKEEEEKERKDMEKEEKKKDKEDKKKDKEDKKKAKVQKEKKE) the composition is skewed to basic and acidic residues. Basic residues predominate over residues 175–189 (KKEKKNRNHHFHYSE).

The protein belongs to the peptidase C85 family.

It localises to the nucleus. The enzyme catalyses Thiol-dependent hydrolysis of ester, thioester, amide, peptide and isopeptide bonds formed by the C-terminal Gly of ubiquitin (a 76-residue protein attached to proteins as an intracellular targeting signal).. Its function is as follows. Hydrolase that can remove conjugated ubiquitin from proteins in vitro and may therefore play an important regulatory role at the level of protein turnover by preventing degradation. This chain is Putative OVARIAN TUMOR DOMAIN-containing deubiquitinating enzyme 8, found in Arabidopsis thaliana (Mouse-ear cress).